An 876-amino-acid chain; its full sequence is Valine--tRNA ligase (876 aa).

Residues 44–54 (PNVTGKLHLGH) carry the 'HIGH' region motif. The 'KMSKS' region motif lies at 520–524 (KMSKS). Lysine 523 is an ATP binding site. Residues 805–876 (LEGLIDMDKE…VKARIEQLKA (72 aa)) adopt a coiled-coil conformation.

The protein belongs to the class-I aminoacyl-tRNA synthetase family. ValS type 1 subfamily. In terms of assembly, monomer.

Its subcellular location is the cytoplasm. The catalysed reaction is tRNA(Val) + L-valine + ATP = L-valyl-tRNA(Val) + AMP + diphosphate. Catalyzes the attachment of valine to tRNA(Val). As ValRS can inadvertently accommodate and process structurally similar amino acids such as threonine, to avoid such errors, it has a 'posttransfer' editing activity that hydrolyzes mischarged Thr-tRNA(Val) in a tRNA-dependent manner. This is Valine--tRNA ligase from Staphylococcus aureus (strain JH1).